A 117-amino-acid polypeptide reads, in one-letter code: Non-specific lipid-transfer protein 2B (117 aa).

The N-terminal stretch at 1–25 (MARAQLVLVALVAALLLAGPHTTMA) is a signal peptide. 4 cysteine pairs are disulfide-bonded: cysteine 29/cysteine 76, cysteine 39/cysteine 53, cysteine 54/cysteine 99, and cysteine 74/cysteine 113.

The protein belongs to the plant LTP family. Expressed in roots, mesocotyls and developing leaves.

Its function is as follows. Plant non-specific lipid-transfer proteins transfer phospholipids as well as galactolipids across membranes. May play a role in wax or cutin deposition in the cell walls of expanding epidermal cells and certain secretory tissues. The chain is Non-specific lipid-transfer protein 2B (LTP2-B) from Oryza sativa subsp. japonica (Rice).